A 67-amino-acid polypeptide reads, in one-letter code: Large ribosomal subunit protein uL29 (67 aa).

The protein belongs to the universal ribosomal protein uL29 family.

This chain is Large ribosomal subunit protein uL29, found in Wolbachia pipientis wMel.